Here is a 318-residue protein sequence, read N- to C-terminus: CRISPR-associated endonuclease Cas1 1 (318 aa).

Residues glutamate 160, histidine 225, and glutamate 240 each contribute to the Mn(2+) site.

It belongs to the CRISPR-associated endonuclease Cas1 family. Homodimer, forms a heterotetramer with a Cas2 homodimer. Mg(2+) serves as cofactor. The cofactor is Mn(2+).

CRISPR (clustered regularly interspaced short palindromic repeat), is an adaptive immune system that provides protection against mobile genetic elements (viruses, transposable elements and conjugative plasmids). CRISPR clusters contain spacers, sequences complementary to antecedent mobile elements, and target invading nucleic acids. CRISPR clusters are transcribed and processed into CRISPR RNA (crRNA). Acts as a dsDNA endonuclease. Involved in the integration of spacer DNA into the CRISPR cassette. This Thermodesulfovibrio yellowstonii (strain ATCC 51303 / DSM 11347 / YP87) protein is CRISPR-associated endonuclease Cas1 1.